Reading from the N-terminus, the 802-residue chain is Protein enabled homolog (802 aa).

The WH1 domain maps to 1 to 111 (MSEQSICQAR…SAMMHALEVL (111 aa)). Residues 143–155 (NSQLPAQVQNGPS) are compositionally biased toward polar residues. Residues 143–166 (NSQLPAQVQNGPSQEELEIQRRQL) are disordered. S144 carries the phosphoserine modification. A coiled-coil region spans residues 154 to 258 (PSQEELEIQR…ERERRMSNAA (105 aa)). 7 consecutive repeat copies span residues 175-179 (LERER), 180-184 (MERER), 185-189 (LERER), 190-194 (LERER), 195-199 (LERER), 200-204 (LEQEQ), and 205-209 (LERQR). A 7 X 5 AA tandem repeats of [LM]-E-[QR]-[EQ]-[QR] region spans residues 175–209 (LERERMERERLERERLERERLERERLEQEQLERQR). Basic and acidic residues predominate over residues 245–254 (QVEWERERRM). 2 disordered regions span residues 245 to 287 (QVEW…PSYA) and 341 to 622 (ATVP…RPLT). S255 is modified (phosphoserine; by PKA). Residues 255 to 278 (SNAAPSSDSSLSSAPLPEYSSCQP) show a composition bias toward low complexity. The span at 348 to 361 (NKNSRPSSPVNTPS) shows a compositional bias: polar residues. Phosphoserine is present on S383. Positions 386–410 (IMISSPPGKATGPRPVLPVCVSSPV) are enriched in low complexity. Residues 431–464 (VSPPPTSGPAAPPPPPPPPPPPPPPPLPPPPLPP) show a composition bias toward pro residues. The span at 485–505 (STPSSKPSVLPSPSAGAPASA) shows a compositional bias: low complexity. A compositionally biased stretch (polar residues) spans 525 to 535 (AASQPAESPTP). The segment covering 542-553 (PPAPPPPPPLPS) has biased composition (pro residues). Position 557 is a phosphotyrosine (Y557). Pro residues predominate over residues 561 to 605 (LPPPPGPPPPPPLPSTGPPPPPPPPPPLPNQAPPPPPPPPAPPLP). Positions 623–643 (GLAAAIAGAKLRKVSRVEDGS) are EVH2 block A. The interval 623–799 (GLAAAIAGAK…DAIRQELSKS (177 aa)) is EVH2. Residues 632-635 (KLRK) carry the KLKR motif. 2 disordered regions span residues 639 to 675 (VEDG…GGSG) and 691 to 764 (AEKG…TEGL). A compositionally biased stretch (gly residues) spans 664–675 (RGNGPLPLGGSG). The tract at residues 674–691 (SGLMEEMSALLARRRRIA) is EVH2 block B. Positions 731–760 (RTNTMNGSKSPVISRPKSTPSSQPSANGVQ) are enriched in polar residues. Residues S738 and S740 each carry the phosphoserine modification. The segment at 765 to 799 (DYDRLKQDILDEMRKELAKLKEELIDAIRQELSKS) is EVH2 block C. Positions 767 to 797 (DRLKQDILDEMRKELAKLKEELIDAIRQELS) form a coiled coil.

Belongs to the Ena/VASP family. In terms of assembly, homotetramer. Interacts with APBB1IP, APBB1, PFN1 and ROBO4. Isoforms, containing the polyproline-rich regions with PPLP motifs, bind the WW domain of APBB1IP. Isoforms, containing the PPSY motif, bind, in vitro, to the WW2 and WW3 domains of NEDD4 and to the WW1 domain of YAP1. Binds the SH3 domain of BAIAP2-alpha but only after the autoinhibitory region of BAIAP2-alpha has been blocked by interaction with CDC42. Interacts, via the EVH1/WH1 domain, with the Pro-rich domains from VCL, ZYX and Listeria monocytogenes actA and with TES (via LIM domain). The TES LIM domain and the Pro-rich domains from VCL or ZYX compete for the same binding site. Interaction with ZYX is important for targeting ENAH to focal adhesions and enhances production of actin-rich structures at the apical surface of cells. Binds GPHN. Heterotrimer with TES and ACTL7A. Interacts with FAT1 (via EVH1 domains). Interacts, through the Pro-rich region, with the C-terminal SH3 domain of DNMPB. Interacts with PRPF40A. In terms of processing, NTN1-induced PKA phosphorylation on Ser-255 directly parallels the formation of filopodial protrusions. As to expression, expressed in heart and testis, lower levels in lung, skeletal muscle, kidney, pancreas and brain. Isoform 5 is expressed exclusively in the brain. Isoform 2 is expressed predominantly in brain, testis, ovary and fat. In the brain, isoforms 2 and 5 are expressed at highest levels in the hippocampus, cortex and midbrain, and at lowest levels in the striatum and cerebellum. Isoform 6 is expressed in brain and spleen.

It is found in the cytoplasm. The protein localises to the cytoskeleton. The protein resides in the cell projection. It localises to the lamellipodium. Its subcellular location is the filopodium. It is found in the synapse. The protein localises to the cell junction. The protein resides in the focal adhesion. Functionally, ena/VASP proteins are actin-associated proteins involved in a range of processes dependent on cytoskeleton remodeling and cell polarity such as axon guidance and lamellipodial and filopodial dynamics in migrating cells. ENAH induces the formation of F-actin rich outgrowths in fibroblasts. Acts synergistically with BAIAP2-alpha and downstream of NTN1 to promote filipodia formation. The protein is Protein enabled homolog (Enah) of Mus musculus (Mouse).